The following is an 847-amino-acid chain: Guanine nucleotide exchange factor VAV3 (847 aa).

The Calponin-homology (CH) domain maps to 1–119 (MEPWKQCAQW…ETLSRLSRTP (119 aa)). The residue at position 141 (tyrosine 141) is a Phosphotyrosine. Positions 192 to 371 (IRSCCLAEIK…KDLAQYVNEV (180 aa)) constitute a DH domain. The PH domain occupies 400-502 (RPQGDGEIRI…WLEQFEMALS (103 aa)). A Phorbol-ester/DAG-type zinc finger spans residues 513–562 (FHDFKMHTFTRVTSCKVCQMLLRGTFYQGYLCFKCGARAHKECLGRVDNC). The segment at 560-847 (DNCGRVNSGE…FPSTYVEEDE (288 aa)) is sufficient for interaction with ROS1. The SH3 1 domain occupies 592–660 (PGLPKMQVIR…PSDAVKPCPC (69 aa)). The 95-residue stretch at 672-766 (WYAGAMERLQ…TLDTTLQFPY (95 aa)) folds into the SH2 domain. The region spanning 788–847 (KVLGIAIARYDFCARDMRELSLLKGDVVKIYTKMSANGWWRGEVNGRVGWFPSTYVEEDE) is the SH3 2 domain.

In terms of assembly, interacts with the PH domain of SH2B2. Interacts (via SH2 domains) with the phosphorylated form of EPHA2. Interacts with ROS1; constitutive interaction that mediates VAV3 phosphorylation. In terms of processing, phosphorylated. Phosphorylation can be mediated by ROS1. In osteoclasts, undergoes tyrosine phosphorylation in response to CSF1. Isoform 1 and isoform 3 are widely expressed; both are expressed at very low levels in skeletal muscle. In keratinocytes, isoform 1 is less abundant than isoform 3. Isoform 3 is detected at very low levels, if any, in adrenal gland, bone marrow, spleen, fetal brain and spinal cord; in these tissues, isoform 1 is readily detectable.

Exchange factor for GTP-binding proteins RhoA, RhoG and, to a lesser extent, Rac1. Binds physically to the nucleotide-free states of those GTPases. Plays an important role in angiogenesis. Its recruitment by phosphorylated EPHA2 is critical for EFNA1-induced RAC1 GTPase activation and vascular endothelial cell migration and assembly. May be important for integrin-mediated signaling, at least in some cell types. In osteoclasts, along with SYK tyrosine kinase, required for signaling through integrin alpha-v/beta-1 (ITAGV-ITGB1), a crucial event for osteoclast proper cytoskeleton organization and function. This signaling pathway involves RAC1, but not RHO, activation. Necessary for proper wound healing. In the course of wound healing, required for the phagocytotic cup formation preceding macrophage phagocytosis of apoptotic neutrophils. Responsible for integrin beta-2 (ITGB2)-mediated macrophage adhesion and, to a lesser extent, contributes to beta-3 (ITGB3)-mediated adhesion. Does not affect integrin beta-1 (ITGB1)-mediated adhesion. This chain is Guanine nucleotide exchange factor VAV3 (VAV3), found in Homo sapiens (Human).